We begin with the raw amino-acid sequence, 491 residues long: LETM1 domain-containing protein LETM2, mitochondrial (491 aa).

The transit peptide at 1–25 (MAFYSYNSVLAIARTRFPSHFVHPT) directs the protein to the mitochondrion. At 26 to 177 (CSSYSPSCAF…LLRTCVDFFR (152 aa)) the chain is on the mitochondrial intermembrane side. Over residues 94 to 109 (EQATKHPQVTSPQATK) the composition is skewed to polar residues. The interval 94-115 (EQATKHPQVTSPQATKETGMEI) is disordered. The helical transmembrane segment at 178-198 (LVPFMVFLIVPFMEFLLPVFL) threads the bilayer. At 199–491 (KLFPEMLPST…QNSKASSKGA (293 aa)) the chain is on the mitochondrial matrix side. Residues 208 to 235 (TFESESKKEEKQKKKMAVKLELAKFLQE) adopt a coiled-coil conformation. The Letm1 RBD domain maps to 221 to 438 (KKMAVKLELA…LAPQLKGTKD (218 aa)). The interval 435 to 491 (GTKDEDFIQPPPVTSSPITPSTPISLPKGPITSSEEPTLQAKSQMTAQNSKASSKGA) is disordered. The segment covering 449-461 (SSPITPSTPISLP) has biased composition (low complexity). The span at 465-491 (ITSSEEPTLQAKSQMTAQNSKASSKGA) shows a compositional bias: polar residues.

Its subcellular location is the mitochondrion inner membrane. This is LETM1 domain-containing protein LETM2, mitochondrial (LETM2) from Homo sapiens (Human).